The following is a 320-amino-acid chain: Porphobilinogen deaminase (320 aa).

Position 241 is an S-(dipyrrolylmethanemethyl)cysteine (cysteine 241).

This sequence belongs to the HMBS family. Monomer. It depends on dipyrromethane as a cofactor.

It catalyses the reaction 4 porphobilinogen + H2O = hydroxymethylbilane + 4 NH4(+). The protein operates within porphyrin-containing compound metabolism; protoporphyrin-IX biosynthesis; coproporphyrinogen-III from 5-aminolevulinate: step 2/4. Its function is as follows. Tetrapolymerization of the monopyrrole PBG into the hydroxymethylbilane pre-uroporphyrinogen in several discrete steps. This Thermobifida fusca (strain YX) protein is Porphobilinogen deaminase.